Consider the following 366-residue polypeptide: tRNA/tmRNA (uracil-C(5))-methyltransferase (366 aa).

Positions 190, 218, 223, 239, and 299 each coordinate S-adenosyl-L-methionine. Cys-324 serves as the catalytic Nucleophile. The Proton acceptor role is filled by Glu-358.

This sequence belongs to the class I-like SAM-binding methyltransferase superfamily. RNA M5U methyltransferase family. TrmA subfamily.

The catalysed reaction is uridine(54) in tRNA + S-adenosyl-L-methionine = 5-methyluridine(54) in tRNA + S-adenosyl-L-homocysteine + H(+). It carries out the reaction uridine(341) in tmRNA + S-adenosyl-L-methionine = 5-methyluridine(341) in tmRNA + S-adenosyl-L-homocysteine + H(+). Its function is as follows. Dual-specificity methyltransferase that catalyzes the formation of 5-methyluridine at position 54 (m5U54) in all tRNAs, and that of position 341 (m5U341) in tmRNA (transfer-mRNA). In Shigella boydii serotype 18 (strain CDC 3083-94 / BS512), this protein is tRNA/tmRNA (uracil-C(5))-methyltransferase.